The primary structure comprises 351 residues: Phenylacetaldoxime dehydratase (351 aa).

Belongs to the heme-containing dehydratase family. In terms of assembly, monomer. It depends on heme b as a cofactor.

It catalyses the reaction (Z)-phenylacetaldehyde oxime = phenylacetonitrile + H2O. Catalyzes the stoichiometric dehydration of Z-phenylacetaldoxime to phenylacetonitrile. Prefers the Z-form of phenylacetaldoxime over its E-isomer. The sequence is that of Phenylacetaldoxime dehydratase from Bacillus sp. (strain OxB-1).